Here is a 1486-residue protein sequence, read N- to C-terminus: Chromosome partition protein MukB (1486 aa).

Position 34 to 41 (34 to 41 (GGNGAGKS)) interacts with ATP. Coiled coils occupy residues 326–418 (LEAD…QYNQ), 444–480 (LETF…QAYQ), and 509–603 (RHLA…RAPV). Residues 666-783 (PGGSEDQRLN…EVPLFGRAAR (118 aa)) are flexible hinge. Coiled coils occupy residues 835–923 (EAEI…AKLE), 977–1115 (EMLS…TAKA), and 1209–1266 (VEAI…QNVS).

The protein belongs to the SMC family. MukB subfamily. As to quaternary structure, homodimerization via its hinge domain. Binds to DNA via its C-terminal region. Interacts, and probably forms a ternary complex, with MukE and MukF via its C-terminal region. The complex formation is stimulated by calcium or magnesium. Interacts with tubulin-related protein FtsZ.

It is found in the cytoplasm. The protein localises to the nucleoid. Plays a central role in chromosome condensation, segregation and cell cycle progression. Functions as a homodimer, which is essential for chromosome partition. Involved in negative DNA supercoiling in vivo, and by this means organize and compact chromosomes. May achieve or facilitate chromosome segregation by condensation DNA from both sides of a centrally located replisome during cell division. This Escherichia coli O127:H6 (strain E2348/69 / EPEC) protein is Chromosome partition protein MukB.